The primary structure comprises 35 residues: Cupiennin-1d (35 aa).

Glutamic acid 1-amide is present on Glu-35.

This sequence belongs to the cationic peptide 04 (cupiennin) family. 01 subfamily. Expressed by the venom gland.

Its subcellular location is the secreted. Functionally, has antimicrobial activity against B.subtilis, E.coli, E.faecalis, P.aeruginosa, and S.aureus. Has insecticidal and hemolytic activities. Probably acts by disturbing membrane function with its amphipathic structure. This Cupiennius salei (American wandering spider) protein is Cupiennin-1d.